A 551-amino-acid chain; its full sequence is Dihydroxy-acid dehydratase (551 aa).

Residue Cys52 participates in [2Fe-2S] cluster binding. Residue Asp84 coordinates Mg(2+). Cys125 provides a ligand contact to [2Fe-2S] cluster. 2 residues coordinate Mg(2+): Asp126 and Lys127. N6-carboxylysine is present on Lys127. Cys197 contacts [2Fe-2S] cluster. A Mg(2+)-binding site is contributed by Glu448. The active-site Proton acceptor is Ser474.

It belongs to the IlvD/Edd family. As to quaternary structure, homodimer. [2Fe-2S] cluster serves as cofactor. It depends on Mg(2+) as a cofactor.

It catalyses the reaction (2R)-2,3-dihydroxy-3-methylbutanoate = 3-methyl-2-oxobutanoate + H2O. The enzyme catalyses (2R,3R)-2,3-dihydroxy-3-methylpentanoate = (S)-3-methyl-2-oxopentanoate + H2O. It functions in the pathway amino-acid biosynthesis; L-isoleucine biosynthesis; L-isoleucine from 2-oxobutanoate: step 3/4. The protein operates within amino-acid biosynthesis; L-valine biosynthesis; L-valine from pyruvate: step 3/4. In terms of biological role, functions in the biosynthesis of branched-chain amino acids. Catalyzes the dehydration of (2R,3R)-2,3-dihydroxy-3-methylpentanoate (2,3-dihydroxy-3-methylvalerate) into 2-oxo-3-methylpentanoate (2-oxo-3-methylvalerate) and of (2R)-2,3-dihydroxy-3-methylbutanoate (2,3-dihydroxyisovalerate) into 2-oxo-3-methylbutanoate (2-oxoisovalerate), the penultimate precursor to L-isoleucine and L-valine, respectively. This Francisella tularensis subsp. tularensis (strain FSC 198) protein is Dihydroxy-acid dehydratase.